The sequence spans 687 residues: UvrABC system protein B (687 aa).

A Helicase ATP-binding domain is found at 26–414 (EGLAAGEMYQ…GAVIEQVVRP (389 aa)). 39–46 (GVTGSGKT) lines the ATP pocket. Positions 92-115 (YYDYYQPEAYVPASDTYIGKDASV) match the Beta-hairpin motif. The 167-residue stretch at 430–596 (QVDDLLSEIR…GIQKAVREII (167 aa)) folds into the Helicase C-terminal domain. A UVR domain is found at 630–665 (AKRLQQLERQMHKHAQNLEFEQAARLRDEIKRIKGW).

Belongs to the UvrB family. In terms of assembly, forms a heterotetramer with UvrA during the search for lesions. Interacts with UvrC in an incision complex.

Its subcellular location is the cytoplasm. Its function is as follows. The UvrABC repair system catalyzes the recognition and processing of DNA lesions. A damage recognition complex composed of 2 UvrA and 2 UvrB subunits scans DNA for abnormalities. Upon binding of the UvrA(2)B(2) complex to a putative damaged site, the DNA wraps around one UvrB monomer. DNA wrap is dependent on ATP binding by UvrB and probably causes local melting of the DNA helix, facilitating insertion of UvrB beta-hairpin between the DNA strands. Then UvrB probes one DNA strand for the presence of a lesion. If a lesion is found the UvrA subunits dissociate and the UvrB-DNA preincision complex is formed. This complex is subsequently bound by UvrC and the second UvrB is released. If no lesion is found, the DNA wraps around the other UvrB subunit that will check the other stand for damage. The sequence is that of UvrABC system protein B from Nitrosococcus oceani (strain ATCC 19707 / BCRC 17464 / JCM 30415 / NCIMB 11848 / C-107).